The chain runs to 471 residues: Putative multidrug resistance protein MdtD (471 aa).

13 consecutive transmembrane segments (helical) span residues 12–32 (LWIV…VNTA), 49–69 (MVVV…GWLA), 77–97 (IFFT…WSST), 102–124 (VLAR…LTVM), 138–158 (FVTL…GILV), 165–185 (WIFL…LMLM), 197–217 (LSGF…LDGS), 222–242 (LSPL…ALYL), 263–283 (FSLG…LPFM), 286–306 (VFLQ…MIPM), 342–362 (LLFM…VLFL), 396–416 (MIMQ…LGMF), and 431–451 (VFMY…LIFA).

This sequence belongs to the major facilitator superfamily. TCR/Tet family.

It localises to the cell inner membrane. The polypeptide is Putative multidrug resistance protein MdtD (Citrobacter koseri (strain ATCC BAA-895 / CDC 4225-83 / SGSC4696)).